We begin with the raw amino-acid sequence, 358 residues long: U5 small nuclear ribonucleoprotein 40 kDa protein (358 aa).

Lys-18 participates in a covalent cross-link: Glycyl lysine isopeptide (Lys-Gly) (interchain with G-Cter in SUMO2). Arg-21 carries the post-translational modification Asymmetric dimethylarginine. WD repeat units lie at residues 65–104, 108–147, 150–190, 192–231, 234–273, 284–323, and 326–358; these read GHEG…DNYA, GHSG…RVKR, GHTS…AIQT, QNTY…LTYT, GHAD…PKER, NFEK…ILYK, and GHAG…GEIQ. Lys-271 participates in a covalent cross-link: Glycyl lysine isopeptide (Lys-Gly) (interchain with G-Cter in SUMO2).

Component of the pre-catalytic and catalytic spliceosome complexes. Component of the postcatalytic spliceosome P complex. Part of the U5 snRNP complex. Interacts with PRPF8. Component of the U4/U6-U5 tri-snRNP complex composed of the U4, U6 and U5 snRNAs and at least PRPF3, PRPF4, PRPF6, PRPF8, PRPF31, SNRNP200, TXNL4A, WDR57, SNRNP40, DDX23, CD2BP2, PPIH, SNU13, EFTUD2, SART1 and USP39. Component of the minor spliceosome, which splices U12-type introns.

It localises to the nucleus. In terms of biological role, required for pre-mRNA splicing as component of the activated spliceosome. Component of the U5 small nuclear ribonucleoprotein (snRNP) complex and the U4/U6-U5 tri-snRNP complex, building blocks of the spliceosome. As a component of the minor spliceosome, involved in the splicing of U12-type introns in pre-mRNAs. The protein is U5 small nuclear ribonucleoprotein 40 kDa protein (SNRNP40) of Bos taurus (Bovine).